Reading from the N-terminus, the 249-residue chain is DNA repair protein RecO (249 aa).

This sequence belongs to the RecO family.

Functionally, involved in DNA repair and RecF pathway recombination. In Exiguobacterium sp. (strain ATCC BAA-1283 / AT1b), this protein is DNA repair protein RecO.